The chain runs to 478 residues: Nuclear distribution protein PAC1 (478 aa).

Residues 9–41 form the LisH domain; it reads QAEELHKAMIAYLLSANLPKSAAALREELADSV. The stretch at 60–87 forms a coiled coil; sequence TSVVRLQKKIMDLESRNNALQSELDSAT. WD repeat units lie at residues 113–154, 156–196, 200–247, 250–289, 292–352, 354–393, 398–439, and 440–477; these read SHRE…RTIK, HTKA…KNIR, GHDH…CVKT, GHVDWVRDVVASPDGRFLFSAGNDQVARLWDVSSGETKST, GHEH…IKTL, GHDNWVRALAFHPGGKYLLSVSDDKTLRCWDLTQECKCVR, AHGH…GASA, and INGVVPTGKKEDPGGGPMMGIRCVIATGSVDLKVRVFA.

The protein belongs to the WD repeat LIS1/nudF family. In terms of assembly, self-associates. Interacts with NDL1 and dynein.

It localises to the cytoplasm. Its subcellular location is the cytoskeleton. The protein resides in the spindle pole. Functionally, positively regulates the activity of the minus-end directed microtubule motor protein dynein. May enhance dynein-mediated microtubule sliding by targeting dynein to the microtubule plus end. Required for nuclear migration during vegetative growth as well as development. Required for retrograde early endosome (EE) transport from the hyphal tip. Required for localization of dynein to the mitotic spindle poles. Recruits additional proteins to the dynein complex at SPBs. The chain is Nuclear distribution protein PAC1 from Paracoccidioides brasiliensis (strain Pb03).